Reading from the N-terminus, the 217-residue chain is MTNLKLDVLTAEGKTDGQVELPAEIFDREASVALLHQVVNAQLAAKRQGTHSAKTRAEVSGGGRKPFRQKGTGRARQGSIRAPHFTGGGISHGPKPRDYSQRTPKKMIKAALFGALTDRARHERIHVISELVAGQTPSTKSARSFIERITDRRNVLLVVGREDVTAQKSARNLPGVHILFADQLNTYDVLYSDDVVFSVEALNTFINRASGAAQEEK.

The interval 46-102 (KRQGTHSAKTRAEVSGGGRKPFRQKGTGRARQGSIRAPHFTGGGISHGPKPRDYSQR) is disordered.

The protein belongs to the universal ribosomal protein uL4 family. As to quaternary structure, part of the 50S ribosomal subunit.

One of the primary rRNA binding proteins, this protein initially binds near the 5'-end of the 23S rRNA. It is important during the early stages of 50S assembly. It makes multiple contacts with different domains of the 23S rRNA in the assembled 50S subunit and ribosome. In terms of biological role, forms part of the polypeptide exit tunnel. The chain is Large ribosomal subunit protein uL4 from Corynebacterium diphtheriae (strain ATCC 700971 / NCTC 13129 / Biotype gravis).